The sequence spans 329 residues: MTESRWYSTSPPAKLNLFLELLARRDDGFHELDTVMVAIDWRDELHVRRTTNPGVQLSVDWTDGRTSVAAELQVDEDNELLLVPTDDKNLVVRALNRLTETLRLDGGWEVQLNKNIPSGAGMGGASSDAASALQLGWAAARETQSDLPETLKNETLLSLAAEIGSDVPFFLGDLQADRLVQCAHATGRGEKLNFFTLANPLHAVVIYPAASVSTAQVYSRCQVPDSPQSSNELLRALQGIAAESEFSLHNALQAPARGLSSRIDPALECLSKAGLTHCHMTGSGSACFALADSSQQAAIAAETLRSTFPGGALIRPVMSCVVPSEIHIA.

Residue Lys14 is part of the active site. ATP is bound at residue 117–127; that stretch reads PSGAGMGGASS. The active site involves Asp166.

Belongs to the GHMP kinase family. IspE subfamily.

It carries out the reaction 4-CDP-2-C-methyl-D-erythritol + ATP = 4-CDP-2-C-methyl-D-erythritol 2-phosphate + ADP + H(+). It participates in isoprenoid biosynthesis; isopentenyl diphosphate biosynthesis via DXP pathway; isopentenyl diphosphate from 1-deoxy-D-xylulose 5-phosphate: step 3/6. Its function is as follows. Catalyzes the phosphorylation of the position 2 hydroxy group of 4-diphosphocytidyl-2C-methyl-D-erythritol. The polypeptide is 4-diphosphocytidyl-2-C-methyl-D-erythritol kinase (Rhodopirellula baltica (strain DSM 10527 / NCIMB 13988 / SH1)).